Here is a 2793-residue protein sequence, read N- to C-terminus: Iterative polyketide synthase afoE (2793 aa).

The tract at residues 1-401 (MTRASASGSG…PEKPSFWLTP (401 aa)) is N-terminal acylcarrier protein transacylase domain (SAT). The active-site Nucleophile; for transacylase activity is C157. Catalysis depends on H279, which acts as the Proton donor/acceptor; for transacylase activity. The Ketosynthase family 3 (KS3) domain maps to 435–862 (SEPIAIVGMS…GSNASMIVTQ (428 aa)). Catalysis depends on for beta-ketoacyl synthase activity residues C611, H746, and H785. Residues 977–1265 (FGGQISRFVG…SSTITVMAGR (289 aa)) are malonyl-CoA:ACP transacylase (MAT). Positions 1384–1515 (WEFVGYQDDE…ATVEMRSSSD (132 aa)) are N-terminal hotdog fold. Residues 1384 to 1698 (WEFVGYQDDE…YMRVAKASMS (315 aa)) form the PKS/mFAS DH domain. The segment at 1411 to 1696 (YVLSHVIAQT…VQYMRVAKAS (286 aa)) is product template (PT) domain. H1415 serves as the catalytic Proton acceptor; for dehydratase activity. The C-terminal hotdog fold stretch occupies residues 1550-1698 (VEVLQGRNVY…YMRVAKASMS (149 aa)). The active-site Proton donor; for dehydratase activity is D1607. Residues 1734–1776 (PEVRASSEPGAKVKASKTSKKEKKEKKPVTKAKSKSSKPSGWR) form a disordered region. The segment covering 1747 to 1769 (KASKTSKKEKKEKKPVTKAKSKS) has biased composition (basic residues). A Carrier domain is found at 1776–1850 (RDITEEVRNL…KFVQCVSNAL (75 aa)). Position 1810 is an O-(pantetheine 4'-phosphoryl)serine (S1810). The interval 1853–1903 (PNAGPAEAEDDEDEEKSDNSSSESASESDDAGSESSDTGILTPTGEEEQPL) is disordered. Over residues 1859–1868 (EAEDDEDEEK) the composition is skewed to acidic residues. Residues 2115-2294 (NLLAERIGRT…HVDWTDGNLP (180 aa)) form a methyltransferase domain region. A disordered region spans residues 2360-2379 (SRAEKESGKTQAPHAAPGRR). The tract at residues 2387–2630 (VTGATGSLGS…QWIPVDYCAA (244 aa)) is NADPH-binding domain.

Requires pantetheine 4'-phosphate as cofactor.

It catalyses the reaction (3E,5E,7S)-5,7-dimethyl-2-oxonona-3,5-dienyl-[ACP] + 4 malonyl-CoA + AH2 + S-adenosyl-L-methionine + 3 H(+) = 6-[(3E,5E,7S)-5,7-dimethyl-2-oxonona-3,5-dienyl]-2,4-dihydroxy-3-methylbenzaldehyde + holo-[ACP] + A + S-adenosyl-L-homocysteine + 4 CO2 + 4 CoA + H2O. The protein operates within secondary metabolite biosynthesis. Its function is as follows. Iterative polyketide synthase; part of the gene cluster that mediates the biosynthesis of asperfuranone, a probable antitumor agent. The polyketide synthase afoG is responsible for producing the 3,5-dimethyloctadienone moiety from acetyl-CoA, three malonyl-CoA, and two S-adenosyl methionines (SAM). The 3,5-dimethyloctadienone moiety is then loaded onto the SAT domain of afoE and extended with four malonyl-CoA and one SAM, which leads to the formation of 2,4-dihydroxy-6-(5,7-dimethyl-2-oxo-trans-3-trans-5-nonadienyl)-3-methylbenzaldehyde (compound 2) after reductive release and aldol condensation. AfoD is the next enzyme in the biosynthesis sequence and hydroxylates the side chain at the benzylic position of compound 2. After benzylic hydroxylation, a furan ring is formed after five-member ring hemiacetal formation and water elimination. AfoF and afoC are proposed to oxidize the R-diketone proton and to reduce the unconjugated carbonyl group, respectively, to generate asperfuranone. Since no intermediates could be isolated from afoF and afoC deletants, the sequence of these two enzymes is not fully understood. Moreover, since afoC deletant still produces a small amount of asperfuranone, other endogenous oxidoreductases might catalyze the same reaction with much less efficiency. This chain is Iterative polyketide synthase afoE, found in Emericella nidulans (strain FGSC A4 / ATCC 38163 / CBS 112.46 / NRRL 194 / M139) (Aspergillus nidulans).